Here is a 490-residue protein sequence, read N- to C-terminus: ATP synthase subunit beta (490 aa).

An ATP-binding site is contributed by 173-180 (GGAGVGKT).

Belongs to the ATPase alpha/beta chains family. In terms of assembly, F-type ATPases have 2 components, CF(1) - the catalytic core - and CF(0) - the membrane proton channel. CF(1) has five subunits: alpha(3), beta(3), gamma(1), delta(1), epsilon(1). CF(0) has three main subunits: a(1), b(2) and c(9-12). The alpha and beta chains form an alternating ring which encloses part of the gamma chain. CF(1) is attached to CF(0) by a central stalk formed by the gamma and epsilon chains, while a peripheral stalk is formed by the delta and b chains.

Its subcellular location is the cell membrane. It carries out the reaction ATP + H2O + 4 H(+)(in) = ADP + phosphate + 5 H(+)(out). Produces ATP from ADP in the presence of a proton gradient across the membrane. The catalytic sites are hosted primarily by the beta subunits. This chain is ATP synthase subunit beta, found in Bifidobacterium longum subsp. infantis (strain ATCC 15697 / DSM 20088 / JCM 1222 / NCTC 11817 / S12).